We begin with the raw amino-acid sequence, 362 residues long: MDSPEVTFTLAYLVFAVCFVFTPNEFHAAGLTVQNLLSGWLGSEDAAFVPFHLRRTAATLLCHSLLPLGYYVGMCLAASEKRLHALSQAPEAWRLFLLLAVTLPSIACILIYYWSRDRWACHPLARTLALYALPQSGWQAVASSVNTEFRRIDKFATGAPGARVIVTDTWVMKVTTYRVHVAQQQDVHLTVTESRQHELSPDSNLPVQLLTIRVASTNPAVQAFDIWLNSTEYGELCEKLRAPIRRAAHVVIHQSLGDLFLETFASLVEVNPAYSVPSSQELEACIGCMQTRASVKLVKTCQEAATGECQQCYCRPMWCLTCMGKWFASRQDPLRPDTWLASRVPCPTCRARFCILDVCTVR.

The Lumenal portion of the chain corresponds to 1–6; sequence MDSPEV. A helical membrane pass occupies residues 7–27; that stretch reads TFTLAYLVFAVCFVFTPNEFH. The Cytoplasmic segment spans residues 28 to 56; that stretch reads AAGLTVQNLLSGWLGSEDAAFVPFHLRRT. Residues 57–77 traverse the membrane as a helical segment; that stretch reads AATLLCHSLLPLGYYVGMCLA. Topologically, residues 78 to 94 are lumenal; sequence ASEKRLHALSQAPEAWR. A helical transmembrane segment spans residues 95 to 115; sequence LFLLLAVTLPSIACILIYYWS. At 116 to 362 the chain is on the cytoplasmic side; sequence RDRWACHPLA…FCILDVCTVR (247 aa). An RING-type; degenerate zinc finger spans residues 285–350; it reads CIGCMQTRAS…ASRVPCPTCR (66 aa).

This sequence belongs to the TMEM129 family. As to quaternary structure, integral component of ER-resident dislocation complexes.

Its subcellular location is the endoplasmic reticulum membrane. It catalyses the reaction S-ubiquitinyl-[E2 ubiquitin-conjugating enzyme]-L-cysteine + [acceptor protein]-L-lysine = [E2 ubiquitin-conjugating enzyme]-L-cysteine + N(6)-ubiquitinyl-[acceptor protein]-L-lysine.. It functions in the pathway protein modification; protein ubiquitination. In terms of biological role, E3 ubiquitin-protein ligase involved in ER-associated protein degradation, preferentially associates with the E2 enzyme UBE2J2. Exploited by viral US11 proteins to mediate HLA class I proteins degradation. This is E3 ubiquitin-protein ligase TM129 (TMEM129) from Homo sapiens (Human).